The following is a 197-amino-acid chain: Fucoxanthin-chlorophyll a-c binding protein F, chloroplastic (197 aa).

The N-terminal 31 residues, 1–31 (MKFAVFASLLASAAAFAPAQQSARTSVATNM), are a transit peptide targeting the chloroplast. 3 helical membrane passes run 73 to 94 (ISMLAVVGYLVQENGIRLPGDI), 114 to 134 (ISTAGIAQIVAFIGFLEIAVM), and 174 to 196 (GRAAQMGILALMVHEKLGVSLIP).

It belongs to the fucoxanthin chlorophyll protein family. In terms of assembly, the LHC complex of chromophytic algae is composed of fucoxanthin, chlorophyll A and C bound non-covalently by fucoxanthin chlorophyll proteins (FCPs). The ratio of the pigments in lhc; fucoxanthin: chlorophyll C: chlorophyll A is (0.6-1): (0.1-0.3): (1).

It is found in the plastid. Its subcellular location is the chloroplast thylakoid membrane. In terms of biological role, the light-harvesting complex (LHC) functions as a light receptor, it captures and delivers excitation energy to photosystems with which it is closely associated. In chromophytic algae, LHC is associated with photosystem II, energy being transferred from fucoxanthin and chlorophyll C to chlorophyll A and the photosynthetic reaction centers where it is used to synthesize ATP and reducing power. This chain is Fucoxanthin-chlorophyll a-c binding protein F, chloroplastic (FCPF), found in Phaeodactylum tricornutum (Diatom).